Consider the following 605-residue polypeptide: FAD-linked oxidoreductase easE (605 aa).

The signal sequence occupies residues 1–20; it reads MRHFVTFVVGFLLSWGFLSS. 2 N-linked (GlcNAc...) asparagine glycosylation sites follow: Asn46 and Asn105. The FAD-binding PCMH-type domain occupies 122 to 307; that stretch reads CHQGRLPLYS…TQATVRAFPD (186 aa). Asn370 carries N-linked (GlcNAc...) asparagine glycosylation.

The protein belongs to the oxygen-dependent FAD-linked oxidoreductase family. It depends on FAD as a cofactor.

It functions in the pathway alkaloid biosynthesis; ergot alkaloid biosynthesis. FAD-linked oxidoreductase; part of the gene cluster that mediates the biosynthesis of fungal ergot alkaloid ergovaline, the predominant ergopeptine product in E.festucae var. lolii. DmaW catalyzes the first step of ergot alkaloid biosynthesis by condensing dimethylallyl diphosphate (DMAP) and tryptophan to form 4-dimethylallyl-L-tryptophan. The second step is catalyzed by the methyltransferase easF that methylates 4-dimethylallyl-L-tryptophan in the presence of S-adenosyl-L-methionine, resulting in the formation of 4-dimethylallyl-L-abrine. The catalase easC and the FAD-dependent oxidoreductase easE then transform 4-dimethylallyl-L-abrine to chanoclavine-I which is further oxidized by easD in the presence of NAD(+), resulting in the formation of chanoclavine-I aldehyde. Agroclavine dehydrogenase easG then mediates the conversion of chanoclavine-I aldehyde to agroclavine via a non-enzymatic adduct reaction: the substrate is an iminium intermediate that is formed spontaneously from chanoclavine-I aldehyde in the presence of glutathione. The presence of easA is not required to complete this reaction. Further conversion of agroclavine to paspalic acid is a two-step process involving oxidation of agroclavine to elymoclavine and of elymoclavine to paspalic acid, the second step being performed by the elymoclavine oxidase cloA. Paspalic acid is then further converted to D-lysergic acid. Ergovaline is assembled from D-lysergic acid and three different amino acids by the D-lysergyl-peptide-synthetase composed of a monomudular (lpsB) and a trimodular (lpsA) nonribosomal peptide synthetase subunit. The protein is FAD-linked oxidoreductase easE of Epichloe festucae var. lolii (Neotyphodium lolii).